A 150-amino-acid polypeptide reads, in one-letter code: Siroheme decarboxylase NirD subunit (150 aa).

The protein belongs to the Ahb/Nir family. As to quaternary structure, probably forms a complex composed of NirD, NirL, NirG and NirH. All proteins are required for the total conversion of siroheme to didecarboxysiroheme.

The enzyme catalyses siroheme + 2 H(+) = 12,18-didecarboxysiroheme + 2 CO2. The protein operates within porphyrin-containing compound metabolism. Its function is as follows. Involved in heme d1 biosynthesis. Catalyzes the decarboxylation of siroheme into didecarboxysiroheme. The polypeptide is Siroheme decarboxylase NirD subunit (Pseudomonas aeruginosa (strain ATCC 15692 / DSM 22644 / CIP 104116 / JCM 14847 / LMG 12228 / 1C / PRS 101 / PAO1)).